The primary structure comprises 228 residues: General odorant-binding protein 71 (228 aa).

The N-terminal stretch at 1–20 (MCGAIVLLLLVGTSPAPVEG) is a signal peptide. The interval 50-131 (TMGEWGQRDR…GNSSSSSSST (82 aa)) is disordered. The span at 55–72 (GQRDRNGEEQQMMRDYGR) shows a compositional bias: basic and acidic residues. Low complexity predominate over residues 83–99 (GGQTSGSSSSGSAGEHS). Over residues 111-120 (AGQGGNGTRS) the composition is skewed to gly residues. The segment covering 121-131 (GGNSSSSSSST) has biased composition (low complexity). Cystine bridges form between Cys-138–Cys-199 and Cys-185–Cys-208.

Belongs to the PBP/GOBP family.

The protein localises to the secreted. Present in the aqueous fluid surrounding olfactory sensory dendrites and are thought to aid in the capture and transport of hydrophobic odorants into and through this fluid. This chain is General odorant-binding protein 71 (Obp71), found in Anopheles gambiae (African malaria mosquito).